The chain runs to 240 residues: 1-(5-phosphoribosyl)-5-[(5-phosphoribosylamino)methylideneamino] imidazole-4-carboxamide isomerase (240 aa).

Asp-8 acts as the Proton acceptor in catalysis. Asp-129 (proton donor) is an active-site residue.

The protein belongs to the HisA/HisF family.

Its subcellular location is the cytoplasm. The catalysed reaction is 1-(5-phospho-beta-D-ribosyl)-5-[(5-phospho-beta-D-ribosylamino)methylideneamino]imidazole-4-carboxamide = 5-[(5-phospho-1-deoxy-D-ribulos-1-ylimino)methylamino]-1-(5-phospho-beta-D-ribosyl)imidazole-4-carboxamide. It functions in the pathway amino-acid biosynthesis; L-histidine biosynthesis; L-histidine from 5-phospho-alpha-D-ribose 1-diphosphate: step 4/9. The polypeptide is 1-(5-phosphoribosyl)-5-[(5-phosphoribosylamino)methylideneamino] imidazole-4-carboxamide isomerase (Listeria monocytogenes serotype 4b (strain F2365)).